A 403-amino-acid polypeptide reads, in one-letter code: Na(+)-translocating NADH-quinone reductase subunit B (403 aa).

9 helical membrane-spanning segments follow: residues 56–76 (MMIT…WNTG), 121–141 (AYFL…EVLF), 163–183 (ILPP…GVVI), 220–240 (WTAV…SGGI), 265–285 (TSTL…IASW), 287–307 (IVSG…LIGS), 312–332 (MFAM…GMFF), 348–368 (WIFG…NPAF), and 371–391 (GMML…HFVV). An FMN phosphoryl threonine modification is found at Thr-230.

The protein belongs to the NqrB/RnfD family. As to quaternary structure, composed of six subunits; NqrA, NqrB, NqrC, NqrD, NqrE and NqrF. FMN serves as cofactor.

The protein resides in the cell inner membrane. It carries out the reaction a ubiquinone + n Na(+)(in) + NADH + H(+) = a ubiquinol + n Na(+)(out) + NAD(+). In terms of biological role, NQR complex catalyzes the reduction of ubiquinone-1 to ubiquinol by two successive reactions, coupled with the transport of Na(+) ions from the cytoplasm to the periplasm. NqrA to NqrE are probably involved in the second step, the conversion of ubisemiquinone to ubiquinol. The chain is Na(+)-translocating NADH-quinone reductase subunit B from Ectopseudomonas mendocina (strain ymp) (Pseudomonas mendocina).